A 149-amino-acid polypeptide reads, in one-letter code: Large ribosomal subunit protein bL9 (149 aa).

It belongs to the bacterial ribosomal protein bL9 family.

Its function is as follows. Binds to the 23S rRNA. This is Large ribosomal subunit protein bL9 from Haemophilus influenzae (strain PittEE).